Reading from the N-terminus, the 982-residue chain is Protein cramped (982 aa).

5 disordered regions span residues methionine 1–alanine 37, glutamine 71–lysine 111, serine 323–aspartate 349, asparagine 407–aspartate 456, and glycine 822–glycine 851. Residues glutamine 7 to serine 20 show a composition bias toward pro residues. Residues serine 21 to proline 30 show a composition bias toward low complexity. Over residues serine 86–alanine 98 the composition is skewed to basic and acidic residues. A compositionally biased stretch (polar residues) spans lysine 100–lysine 111. The region spanning serine 109–cysteine 173 is the SANT domain. Residues leucine 410–lysine 425 are compositionally biased toward basic and acidic residues. Phosphoserine is present on residues serine 431 and serine 437. Positions glycine 822 to serine 833 are enriched in low complexity.

It belongs to the cramped family. Ubiquitously expressed throughout embryonic development. High expression is detected in CNS and gonads.

The protein localises to the nucleus. Its function is as follows. Polycomb group (Pc-G) genes are needed to maintain expression patterns of the homeotic selector genes of the Antennapedia (Antp-C) and Bithorax (Bx-C) complexes, and hence for the maintenance of segmental determination. Can act as a modifier of position effect variegation (PEV). This is Protein cramped (crm) from Drosophila melanogaster (Fruit fly).